The primary structure comprises 367 residues: Peptide chain release factor 2 (367 aa).

Q254 is subject to N5-methylglutamine.

The protein belongs to the prokaryotic/mitochondrial release factor family. Post-translationally, methylated by PrmC. Methylation increases the termination efficiency of RF2.

Its subcellular location is the cytoplasm. Peptide chain release factor 2 directs the termination of translation in response to the peptide chain termination codons UGA and UAA. In Neisseria meningitidis serogroup C / serotype 2a (strain ATCC 700532 / DSM 15464 / FAM18), this protein is Peptide chain release factor 2.